The sequence spans 75 residues: Probable protein BRICK1-B (75 aa).

Residues 41 to 72 (MSCRSRLATLNEKLTTLERRIEYIEARVTKGE) adopt a coiled-coil conformation.

It belongs to the BRK1 family.

It is found in the cytoplasm. The protein localises to the cytoskeleton. Functionally, involved in regulation of actin and microtubule organization. Part of a WAVE complex that activates the Arp2/3 complex. The sequence is that of Probable protein BRICK1-B (brk1-b) from Xenopus laevis (African clawed frog).